The chain runs to 483 residues: Altronate oxidoreductase (483 aa).

Isoleucine 18–alanine 29 serves as a coordination point for NAD(+).

Belongs to the mannitol dehydrogenase family. UxaB subfamily.

It carries out the reaction D-altronate + NAD(+) = keto-D-tagaturonate + NADH + H(+). Its pathway is carbohydrate metabolism; pentose and glucuronate interconversion. The chain is Altronate oxidoreductase from Yersinia pestis.